Reading from the N-terminus, the 162-residue chain is uncharacterized protein (162 aa).

Positions 6-71 (LDDLDRAILK…PIKPRKLALV (66 aa)) constitute an HTH asnC-type domain. A DNA-binding region (H-T-H motif) is located at residues 25-44 (IAEISNQLKKPESTVHFRIK).

This is an uncharacterized protein from Pyrococcus abyssi (strain GE5 / Orsay).